The sequence spans 269 residues: 3-methyl-2-oxobutanoate hydroxymethyltransferase (269 aa).

Mg(2+) contacts are provided by Asp48 and Asp87. Residues 48 to 49, Asp87, and Lys116 each bind 3-methyl-2-oxobutanoate; that span reads DS. Glu118 contacts Mg(2+). Glu185 (proton acceptor) is an active-site residue.

It belongs to the PanB family. Homodecamer; pentamer of dimers. Requires Mg(2+) as cofactor.

It localises to the cytoplasm. The catalysed reaction is 3-methyl-2-oxobutanoate + (6R)-5,10-methylene-5,6,7,8-tetrahydrofolate + H2O = 2-dehydropantoate + (6S)-5,6,7,8-tetrahydrofolate. It functions in the pathway cofactor biosynthesis; (R)-pantothenate biosynthesis; (R)-pantoate from 3-methyl-2-oxobutanoate: step 1/2. Functionally, catalyzes the reversible reaction in which hydroxymethyl group from 5,10-methylenetetrahydrofolate is transferred onto alpha-ketoisovalerate to form ketopantoate. This chain is 3-methyl-2-oxobutanoate hydroxymethyltransferase, found in Campylobacter curvus (strain 525.92).